Consider the following 60-residue polypeptide: Large ribosomal subunit protein uL30 (60 aa).

Belongs to the universal ribosomal protein uL30 family. As to quaternary structure, part of the 50S ribosomal subunit.

This Streptococcus pyogenes serotype M1 protein is Large ribosomal subunit protein uL30.